The sequence spans 129 residues: MGRLFVLTLEGKIYSCKHCGTHLALSENIVSKSFHCKHGKAYLFSKVVNVTSGEIENRMMMTGMHTVADIFCVCCGSIVGWKYETAHEKSQKYKEGKSVLERFKITGPDGSHYWASHDTHVAGSDADDV.

Positions 12 to 109 (KIYSCKHCGT…LERFKITGPD (98 aa)) constitute a Yippee domain. Zn(2+) contacts are provided by Cys16, Cys19, Cys72, and Cys75.

It belongs to the yippee family.

This chain is Protein yippee-like, found in Solanum tuberosum (Potato).